Reading from the N-terminus, the 139-residue chain is Immunogenic miracidial antigen 8I' (139 aa).

The tract at residues 61 to 139 is disordered; the sequence is IDVGDEDYHD…PKKYGSGYKH (79 aa). The span at 64-85 shows a compositional bias: acidic residues; sequence GDEDYHDGDDDVDYTDDVDDVD. Positions 90–103 are enriched in polar residues; it reads SPSQLLQGGYQRNQ.

It belongs to the immunogenic miracidial antigen family.

This Schistosoma japonicum (Blood fluke) protein is Immunogenic miracidial antigen 8I' (8I').